The primary structure comprises 331 residues: Vitamin B12 import system permease protein BtuC (331 aa).

The next 9 helical transmembrane spans lie at 20–42, 62–84, 91–113, 117–136, 148–170, 190–209, 240–262, 277–296, and 303–325; these read VMLA…FLSP, LVAA…VLLG, GVLG…LPVM, TVFM…ILVG, MLLV…FYFS, SWHH…WLCL, LAIS…VGLV, FLLP…SDIW, and SAEL…WMLI.

The protein belongs to the binding-protein-dependent transport system permease family. FecCD subfamily. The complex is composed of two ATP-binding proteins (BtuD), two transmembrane proteins (BtuC) and a solute-binding protein (BtuF).

It localises to the cell inner membrane. Part of the ABC transporter complex BtuCDF involved in vitamin B12 import. Involved in the translocation of the substrate across the membrane. The sequence is that of Vitamin B12 import system permease protein BtuC from Vibrio vulnificus (strain CMCP6).